Reading from the N-terminus, the 64-residue chain is uncharacterized protein (64 aa).

The chain crosses the membrane as a helical span at residues 15–37; that stretch reads VVVPRFVRFIVYVVLFTVAVQRV.

This sequence belongs to the HHV-5 US34A protein family.

The protein localises to the host membrane. This is an uncharacterized protein from Homo sapiens (Human).